A 553-amino-acid chain; its full sequence is Chaperonin GroEL 2 (553 aa).

ATP is bound by residues 29-32, 86-90, Gly-414, and Asp-495; these read TLGP and DGTTT.

The protein belongs to the chaperonin (HSP60) family. As to quaternary structure, forms a cylinder of 14 subunits composed of two heptameric rings stacked back-to-back. Interacts with the co-chaperonin GroES.

It is found in the cytoplasm. It catalyses the reaction ATP + H2O + a folded polypeptide = ADP + phosphate + an unfolded polypeptide.. Together with its co-chaperonin GroES, plays an essential role in assisting protein folding. The GroEL-GroES system forms a nano-cage that allows encapsulation of the non-native substrate proteins and provides a physical environment optimized to promote and accelerate protein folding. In Gloeobacter violaceus (strain ATCC 29082 / PCC 7421), this protein is Chaperonin GroEL 2.